The following is a 760-amino-acid chain: Probable myosin-binding protein 4 (760 aa).

Residues 26-46 form a helical membrane-spanning segment; it reads WFLILLMFIDALLSYLLVWFA. 4 disordered regions span residues 161–189, 247–273, 292–311, and 348–595; these read SRGR…SLKK, SEKR…QPVL, SMLG…VKAK, and EAEV…KHSA. The segment covering 352-366 has biased composition (low complexity); it reads SGSSSPSGGEFLSPS. Positions 371-383 are enriched in basic and acidic residues; that stretch reads ASREIRIQEHDDS. A compositionally biased stretch (polar residues) spans 385 to 394; that stretch reads DFSQNITSSA. A coiled-coil region spans residues 388–416; that stretch reads QNITSSAMEIEEFEAAIEQKESDHMDVSG. Residues 404–413 show a composition bias toward basic and acidic residues; it reads IEQKESDHMD. Composition is skewed to acidic residues over residues 446-458 and 517-526; these read LEQE…ESEV and EEDVDNEESE. 2 stretches are compositionally biased toward basic and acidic residues: residues 537–550 and 562–580; these read VKEE…HGDH and SKEE…KITE. The GTD-binding domain maps to 611 to 709; sequence SLVEVLKQQL…DLEMELEYYR (99 aa). The segment at 725–760 is disordered; sequence GILGNTEETNVTSPTDETSIKDSTDTKLTGSPSAEN. Polar residues-rich tracts occupy residues 730–741 and 750–760; these read TEETNVTSPTDE and TKLTGSPSAEN.

The protein localises to the endomembrane system. Membrane-anchored myosin receptors that define a distinct, plant-specific transport vesicle compartment. This chain is Probable myosin-binding protein 4, found in Arabidopsis thaliana (Mouse-ear cress).